A 154-amino-acid polypeptide reads, in one-letter code: Ribosome maturation factor RimP (154 aa).

This sequence belongs to the RimP family.

Its subcellular location is the cytoplasm. Functionally, required for maturation of 30S ribosomal subunits. The polypeptide is Ribosome maturation factor RimP (Flavobacterium psychrophilum (strain ATCC 49511 / DSM 21280 / CIP 103535 / JIP02/86)).